The sequence spans 485 residues: Glutamyl-tRNA(Gln) amidotransferase subunit A (485 aa).

Residues lysine 76 and serine 151 each act as charge relay system in the active site. Serine 175 (acyl-ester intermediate) is an active-site residue.

It belongs to the amidase family. GatA subfamily. Heterotrimer of A, B and C subunits.

It carries out the reaction L-glutamyl-tRNA(Gln) + L-glutamine + ATP + H2O = L-glutaminyl-tRNA(Gln) + L-glutamate + ADP + phosphate + H(+). In terms of biological role, allows the formation of correctly charged Gln-tRNA(Gln) through the transamidation of misacylated Glu-tRNA(Gln) in organisms which lack glutaminyl-tRNA synthetase. The reaction takes place in the presence of glutamine and ATP through an activated gamma-phospho-Glu-tRNA(Gln). The polypeptide is Glutamyl-tRNA(Gln) amidotransferase subunit A (Methylococcus capsulatus (strain ATCC 33009 / NCIMB 11132 / Bath)).